A 154-amino-acid polypeptide reads, in one-letter code: Putative pre-16S rRNA nuclease (154 aa).

This sequence belongs to the YqgF nuclease family.

It is found in the cytoplasm. In terms of biological role, could be a nuclease involved in processing of the 5'-end of pre-16S rRNA. The polypeptide is Putative pre-16S rRNA nuclease (Ruegeria pomeroyi (strain ATCC 700808 / DSM 15171 / DSS-3) (Silicibacter pomeroyi)).